The primary structure comprises 364 residues: Phosphoserine aminotransferase (364 aa).

Arginine 42 is a binding site for L-glutamate. Pyridoxal 5'-phosphate is bound by residues 76 to 77, tryptophan 102, threonine 156, aspartate 175, and glutamine 198; that span reads GR. An N6-(pyridoxal phosphate)lysine modification is found at lysine 199. Pyridoxal 5'-phosphate is bound at residue 240 to 241; that stretch reads NT.

This sequence belongs to the class-V pyridoxal-phosphate-dependent aminotransferase family. SerC subfamily. Homodimer. The cofactor is pyridoxal 5'-phosphate.

The protein localises to the cytoplasm. The catalysed reaction is O-phospho-L-serine + 2-oxoglutarate = 3-phosphooxypyruvate + L-glutamate. The enzyme catalyses 4-(phosphooxy)-L-threonine + 2-oxoglutarate = (R)-3-hydroxy-2-oxo-4-phosphooxybutanoate + L-glutamate. It functions in the pathway amino-acid biosynthesis; L-serine biosynthesis; L-serine from 3-phospho-D-glycerate: step 2/3. Its pathway is cofactor biosynthesis; pyridoxine 5'-phosphate biosynthesis; pyridoxine 5'-phosphate from D-erythrose 4-phosphate: step 3/5. Its function is as follows. Catalyzes the reversible conversion of 3-phosphohydroxypyruvate to phosphoserine and of 3-hydroxy-2-oxo-4-phosphonooxybutanoate to phosphohydroxythreonine. This is Phosphoserine aminotransferase from Shewanella sediminis (strain HAW-EB3).